The chain runs to 494 residues: 4-trimethylaminobutyraldehyde dehydrogenase (494 aa).

S2 carries the post-translational modification N-acetylserine. An N6-acetyllysine; alternate modification is found at K30. N6-succinyllysine; alternate is present on K30. Residue K59 is modified to N6-succinyllysine. NAD(+) contacts are provided by residues K180 and G232–T236. The active-site Proton acceptor is E254. Catalysis depends on C288, which acts as the Nucleophile. An N6-acetyllysine modification is found at K298. K303 is subject to N6-acetyllysine; alternate. K303 carries the N6-succinyllysine; alternate modification. At K344 the chain carries N6-acetyllysine. E391 serves as a coordination point for NAD(+).

This sequence belongs to the aldehyde dehydrogenase family. As to quaternary structure, homotetramer.

Its subcellular location is the cytoplasm. The protein localises to the cytosol. It carries out the reaction 4-(trimethylamino)butanal + NAD(+) + H2O = 4-(trimethylamino)butanoate + NADH + 2 H(+). It catalyses the reaction an aldehyde + NAD(+) + H2O = a carboxylate + NADH + 2 H(+). The catalysed reaction is 4-aminobutanal + NAD(+) + H2O = 4-aminobutanoate + NADH + 2 H(+). The enzyme catalyses formaldehyde + NAD(+) + H2O = formate + NADH + 2 H(+). It carries out the reaction acetaldehyde + NAD(+) + H2O = acetate + NADH + 2 H(+). It catalyses the reaction imidazole-4-acetaldehyde + NAD(+) + H2O = imidazole-4-acetate + NADH + 2 H(+). The catalysed reaction is acrolein + NAD(+) + H2O = acrylate + NADH + 2 H(+). The enzyme catalyses (5-hydroxyindol-3-yl)acetaldehyde + NAD(+) + H2O = (5-hydroxyindol-3-yl)acetate + NADH + 2 H(+). It carries out the reaction 3,4-dihydroxyphenylacetaldehyde + NAD(+) + H2O = 3,4-dihydroxyphenylacetate + NADH + 2 H(+). It catalyses the reaction spermine monoaldehyde + NAD(+) + H2O = N-(2-carboxyethyl)spermidine + NADH + 2 H(+). The catalysed reaction is propanal + NAD(+) + H2O = propanoate + NADH + 2 H(+). The enzyme catalyses butanal + NAD(+) + H2O = butanoate + NADH + 2 H(+). It carries out the reaction pentanal + NAD(+) + H2O = pentanoate + NADH + 2 H(+). It catalyses the reaction hexanal + NAD(+) + H2O = hexanoate + NADH + 2 H(+). Its pathway is amine and polyamine biosynthesis; carnitine biosynthesis. Converts gamma-trimethylaminobutyraldehyde into gamma-butyrobetaine with high efficiency (in vitro). Can catalyze the irreversible oxidation of a broad range of aldehydes to the corresponding acids in an NAD-dependent reaction, but with low efficiency. Catalyzes the oxidation of aldehydes arising from biogenic amines and polyamines. This Mus musculus (Mouse) protein is 4-trimethylaminobutyraldehyde dehydrogenase.